Here is a 1923-residue protein sequence, read N- to C-terminus: Nuclear pore complex protein GP210 (1923 aa).

The N-terminal stretch at 1–22 (MVPVSFCFFFLLLLLSAGESSS) is a signal peptide. N-linked (GlcNAc...) asparagine glycans are attached at residues asparagine 73, asparagine 117, asparagine 289, asparagine 609, asparagine 863, asparagine 903, asparagine 967, asparagine 982, asparagine 1171, asparagine 1199, asparagine 1550, asparagine 1568, and asparagine 1743. In terms of domain architecture, BIG2 spans 1152 to 1205 (IFLVPGASYVLTIEGGPTMNVSVDYTTVDNEVAKIEKSGRLYATSPGNTTIYAT). A helical transmembrane segment spans residues 1829 to 1849 (SVLLKILWGVLVLVVSVIILM).

This sequence belongs to the NUP210 family. In terms of assembly, part of the nuclear pore complex (NPC). The NPC has an eight-fold symmetrical structure comprising a central transport channel and two rings, the cytoplasmic and nuclear rings, to which eight filaments are attached. The cytoplasmic filaments have loose ends, while the nuclear filaments are joined in a distal ring, forming a nuclear basket. NPCs are highly dynamic in configuration and composition, and can be devided in 3 subcomplexes, the NUP62 subcomplex, the NUP107-160 subcomplex and the NUP93 subcomplex, containing approximately 30 different nucleoporin proteins.

The protein localises to the nucleus envelope. It is found in the nucleus membrane. Its subcellular location is the nucleus. It localises to the nuclear pore complex. This is Nuclear pore complex protein GP210 from Arabidopsis thaliana (Mouse-ear cress).